A 507-amino-acid polypeptide reads, in one-letter code: UDP-N-acetylglucosamine 1-carboxyvinyltransferase 1 (507 aa).

41–42 is a binding site for phosphoenolpyruvate; sequence KN. Arg-112 is a UDP-N-acetyl-alpha-D-glucosamine binding site. Cys-136 serves as the catalytic Proton donor. At Cys-136 the chain carries 2-(S-cysteinyl)pyruvic acid O-phosphothioketal. UDP-N-acetyl-alpha-D-glucosamine-binding positions include 141–145, Asp-328, and Leu-350; that span reads RPIDL.

Belongs to the EPSP synthase family. MurA subfamily.

The protein localises to the cytoplasm. It carries out the reaction phosphoenolpyruvate + UDP-N-acetyl-alpha-D-glucosamine = UDP-N-acetyl-3-O-(1-carboxyvinyl)-alpha-D-glucosamine + phosphate. The protein operates within cell wall biogenesis; peptidoglycan biosynthesis. Its function is as follows. Cell wall formation. Adds enolpyruvyl to UDP-N-acetylglucosamine. This Legionella pneumophila (strain Lens) protein is UDP-N-acetylglucosamine 1-carboxyvinyltransferase 1.